Here is a 384-residue protein sequence, read N- to C-terminus: 5-amino-6-(D-ribitylamino)uracil--L-tyrosine 4-hydroxyphenyl transferase 2 (384 aa).

One can recognise a Radical SAM core domain in the interval Val-53–Thr-286. Cys-67, Cys-71, and Cys-74 together coordinate [4Fe-4S] cluster.

The protein belongs to the radical SAM superfamily. CofH family. Consists of two subunits, CofG and CofH. [4Fe-4S] cluster is required as a cofactor.

It catalyses the reaction 5-amino-6-(D-ribitylamino)uracil + L-tyrosine + S-adenosyl-L-methionine = 5-amino-5-(4-hydroxybenzyl)-6-(D-ribitylimino)-5,6-dihydrouracil + 2-iminoacetate + 5'-deoxyadenosine + L-methionine + H(+). The protein operates within cofactor biosynthesis; coenzyme F0 biosynthesis. Catalyzes the radical-mediated synthesis of 5-amino-5-(4-hydroxybenzyl)-6-(D-ribitylimino)-5,6-dihydrouracil from 5-amino-6-(D-ribitylamino)uracil and L-tyrosine. The protein is 5-amino-6-(D-ribitylamino)uracil--L-tyrosine 4-hydroxyphenyl transferase 2 of Methanosarcina acetivorans (strain ATCC 35395 / DSM 2834 / JCM 12185 / C2A).